Here is a 309-residue protein sequence, read N- to C-terminus: Probable cell division protein kinase ECU11_1290 (309 aa).

The Protein kinase domain maps to 4 to 288 (YENIKQVGEG…VISSHKNTYI (285 aa)). ATP-binding positions include 10–18 (VGEGAFGQV) and lysine 33. The active-site Proton acceptor is the aspartate 124.

This sequence belongs to the protein kinase superfamily. CMGC Ser/Thr protein kinase family. CDC2/CDKX subfamily.

It localises to the nucleus. The catalysed reaction is L-seryl-[protein] + ATP = O-phospho-L-seryl-[protein] + ADP + H(+). The enzyme catalyses L-threonyl-[protein] + ATP = O-phospho-L-threonyl-[protein] + ADP + H(+). Its function is as follows. May play a role in the control of the eukaryotic cell cycle. This chain is Probable cell division protein kinase ECU11_1290, found in Encephalitozoon cuniculi (strain GB-M1) (Microsporidian parasite).